The following is a 274-amino-acid chain: Large ribosomal subunit protein uL2 (274 aa).

Disordered regions lie at residues 30 to 54 (EKSL…IRHK) and 223 to 274 (VAMN…QLKG). The segment covering 36–48 (GKKSSGGRNNNGR) has biased composition (low complexity). Residues 263 to 274 (KFSDKYIKQLKG) show a composition bias toward basic and acidic residues.

Belongs to the universal ribosomal protein uL2 family. In terms of assembly, part of the 50S ribosomal subunit. Forms a bridge to the 30S subunit in the 70S ribosome.

Its function is as follows. One of the primary rRNA binding proteins. Required for association of the 30S and 50S subunits to form the 70S ribosome, for tRNA binding and peptide bond formation. It has been suggested to have peptidyltransferase activity; this is somewhat controversial. Makes several contacts with the 16S rRNA in the 70S ribosome. In Wolbachia sp. subsp. Brugia malayi (strain TRS), this protein is Large ribosomal subunit protein uL2.